The following is a 108-amino-acid chain: Glutaredoxin-1 (108 aa).

One can recognise a Glutaredoxin domain in the interval Glu-3–Arg-106. Cys-23 and Cys-26 are oxidised to a cystine.

It belongs to the glutaredoxin family.

It is found in the virion. Its function is as follows. Has thioltransferase and dehydroascorbate reductase activities. This is Glutaredoxin-1 (OPG075) from Camelpox virus (strain M-96).